A 78-amino-acid polypeptide reads, in one-letter code: RNA-binding protein Hfq (78 aa).

In terms of domain architecture, Sm spans 10-70 (DLFLNSVRKQ…ISTIMPSQPV (61 aa)).

Belongs to the Hfq family. Homohexamer.

In terms of biological role, RNA chaperone that binds small regulatory RNA (sRNAs) and mRNAs to facilitate mRNA translational regulation in response to envelope stress, environmental stress and changes in metabolite concentrations. Also binds with high specificity to tRNAs. This chain is RNA-binding protein Hfq, found in Brucella abortus (strain S19).